Reading from the N-terminus, the 268-residue chain is Membrane lipoprotein TpN32 (268 aa).

Residues 1-23 (MKGKTVSAALVGKLIALSVGVVA) form the signal peptide. A lipid anchor (N-palmitoyl cysteine) is attached at C24. A lipid anchor (S-diacylglycerol cysteine) is attached at C24.

This sequence belongs to the NlpA lipoprotein family.

It localises to the cell membrane. This chain is Membrane lipoprotein TpN32 (tpn32), found in Treponema pallidum (strain Nichols).